Reading from the N-terminus, the 279-residue chain is Urease accessory protein UreD (279 aa).

Belongs to the UreD family. UreD, UreF and UreG form a complex that acts as a GTP-hydrolysis-dependent molecular chaperone, activating the urease apoprotein by helping to assemble the nickel containing metallocenter of UreC. The UreE protein probably delivers the nickel.

It localises to the cytoplasm. Functionally, required for maturation of urease via the functional incorporation of the urease nickel metallocenter. The polypeptide is Urease accessory protein UreD (Rhodopseudomonas palustris (strain ATCC BAA-98 / CGA009)).